The chain runs to 404 residues: Propionate kinase PduW (404 aa).

The protein belongs to the acetokinase family. PduW subfamily.

It localises to the cytoplasm. The enzyme catalyses propanoate + ATP = propanoyl phosphate + ADP. It functions in the pathway polyol metabolism; 1,2-propanediol degradation. The protein operates within organic acid metabolism; propanoate degradation. Works with phosphate acetyltransferase (pta) to capture exogenous propionate and regenerate propionyl-CoA during degradation of propionate and 1,2-propanediol (1,2-PD). Ectopic expression partially complements a cobB deletion allowing some growth on propionate. Restores growth to an eutQ deletion on ethanolamine and tetrathionate under anoxic conditions. The polypeptide is Propionate kinase PduW (Salmonella typhimurium (strain LT2 / SGSC1412 / ATCC 700720)).